The sequence spans 356 residues: 16-methoxy-2,3-dihydro-3-hydroxytabersonine synthase (356 aa).

The Zn(2+) site is built by Cys-49, His-71, Cys-102, Cys-105, Cys-108, Cys-116, and Cys-162. Residue 187-192 (GLGAVG) coordinates NAD(+).

It belongs to the zinc-containing alcohol dehydrogenase family. Zn(2+) serves as cofactor. In terms of tissue distribution, expressed in leaf epidermis.

The enzyme catalyses (3R)-3-hydroxy-16-methoxy-2,3-dihydrotabersonine + A = (3R)-1,2-didehydro-3-hydroxy-16-methoxy-2,3-dihydrotabersonine + AH2. It catalyses the reaction (3R)-3-hydroxy-2,3-dihydrotabersonine + A = (3R)-1,2-didehydro-3-hydroxy-2,3-dihydrotabersonine + AH2. It functions in the pathway alkaloid biosynthesis; vindoline biosynthesis. In terms of biological role, converts the unstable imine alcohols produced by CYP71D1V2/T3O into 3-hydroxy-16-methoxy-2,3-dihydrotabersonine or 3-hydroxy-2,3-dihydrotabersonine. This chain is 16-methoxy-2,3-dihydro-3-hydroxytabersonine synthase, found in Catharanthus roseus (Madagascar periwinkle).